We begin with the raw amino-acid sequence, 56 residues long: uncharacterized protein (56 aa).

Residues 33-53 traverse the membrane as a helical segment; that stretch reads INIIYLAIMKIIMNIIMMIMI.

The protein resides in the host membrane. This is an uncharacterized protein from Bos taurus (Bovine).